Here is a 221-residue protein sequence, read N- to C-terminus: GTP cyclohydrolase III (221 aa).

It belongs to the archaeal-type GTP cyclohydrolase family.

It catalyses the reaction GTP + 3 H2O = 2-amino-5-formylamino-6-(5-phospho-D-ribosylamino)pyrimidin-4(3H)-one + 2 phosphate + 2 H(+). Catalyzes the formation of 2-amino-5-formylamino-6-ribofuranosylamino-4(3H)-pyrimidinone ribonucleotide monophosphate and inorganic phosphate from GTP. Also has an independent pyrophosphate phosphohydrolase activity. In Pyrobaculum aerophilum (strain ATCC 51768 / DSM 7523 / JCM 9630 / CIP 104966 / NBRC 100827 / IM2), this protein is GTP cyclohydrolase III.